The following is a 122-amino-acid chain: Large ribosomal subunit protein uL14 (122 aa).

The protein belongs to the universal ribosomal protein uL14 family. As to quaternary structure, part of the 50S ribosomal subunit. Forms a cluster with proteins L3 and L19. In the 70S ribosome, L14 and L19 interact and together make contacts with the 16S rRNA in bridges B5 and B8.

Functionally, binds to 23S rRNA. Forms part of two intersubunit bridges in the 70S ribosome. The protein is Large ribosomal subunit protein uL14 of Caldanaerobacter subterraneus subsp. tengcongensis (strain DSM 15242 / JCM 11007 / NBRC 100824 / MB4) (Thermoanaerobacter tengcongensis).